A 1155-amino-acid polypeptide reads, in one-letter code: DNA-directed RNA polymerase subunit beta (1155 aa).

This sequence belongs to the RNA polymerase beta chain family. The RNAP catalytic core consists of 2 alpha, 1 beta, 1 beta' and 1 omega subunit. When a sigma factor is associated with the core the holoenzyme is formed, which can initiate transcription.

It carries out the reaction RNA(n) + a ribonucleoside 5'-triphosphate = RNA(n+1) + diphosphate. DNA-dependent RNA polymerase catalyzes the transcription of DNA into RNA using the four ribonucleoside triphosphates as substrates. This is DNA-directed RNA polymerase subunit beta from Borrelia turicatae (strain 91E135).